A 174-amino-acid polypeptide reads, in one-letter code: RNA pyrophosphohydrolase (174 aa).

One can recognise a Nudix hydrolase domain in the interval 6-149 (GYRPNVGIIL…KRDVYLGALK (144 aa)). The Nudix box motif lies at 38–59 (GGIKPGESPETAMYRELYEEVG).

Belongs to the Nudix hydrolase family. RppH subfamily. It depends on a divalent metal cation as a cofactor.

Functionally, accelerates the degradation of transcripts by removing pyrophosphate from the 5'-end of triphosphorylated RNA, leading to a more labile monophosphorylated state that can stimulate subsequent ribonuclease cleavage. The sequence is that of RNA pyrophosphohydrolase from Neisseria meningitidis serogroup A / serotype 4A (strain DSM 15465 / Z2491).